The chain runs to 101 residues: Aspartyl/glutamyl-tRNA(Asn/Gln) amidotransferase subunit C (101 aa).

Positions 75–101 (QEALSGAPDAEEQRFRVPRILDEDVAS) are disordered. A compositionally biased stretch (basic and acidic residues) spans 85–101 (EEQRFRVPRILDEDVAS).

The protein belongs to the GatC family. As to quaternary structure, heterotrimer of A, B and C subunits.

The enzyme catalyses L-glutamyl-tRNA(Gln) + L-glutamine + ATP + H2O = L-glutaminyl-tRNA(Gln) + L-glutamate + ADP + phosphate + H(+). It carries out the reaction L-aspartyl-tRNA(Asn) + L-glutamine + ATP + H2O = L-asparaginyl-tRNA(Asn) + L-glutamate + ADP + phosphate + 2 H(+). Functionally, allows the formation of correctly charged Asn-tRNA(Asn) or Gln-tRNA(Gln) through the transamidation of misacylated Asp-tRNA(Asn) or Glu-tRNA(Gln) in organisms which lack either or both of asparaginyl-tRNA or glutaminyl-tRNA synthetases. The reaction takes place in the presence of glutamine and ATP through an activated phospho-Asp-tRNA(Asn) or phospho-Glu-tRNA(Gln). The chain is Aspartyl/glutamyl-tRNA(Asn/Gln) amidotransferase subunit C from Salinispora arenicola (strain CNS-205).